Here is a 307-residue protein sequence, read N- to C-terminus: Vesicle-trafficking protein SEC22a (307 aa).

Serine 2 carries the N-acetylserine modification. At serine 2 to proline 187 the chain is on the cytoplasmic side. Serine 6 and serine 8 each carry phosphoserine. Residues serine 8–isoleucine 119 enclose the Longin domain. The chain crosses the membrane as a helical span at residues alanine 188–isoleucine 208. Residues arginine 209–serine 226 are Lumenal-facing. Residues tyrosine 227 to tyrosine 247 traverse the membrane as a helical segment. Topologically, residues tyrosine 248–asparagine 253 are cytoplasmic. The helical transmembrane segment at valine 254–tyrosine 271 threads the bilayer. Residues glutamate 272 to arginine 274 lie on the Lumenal side of the membrane. The chain crosses the membrane as a helical span at residues asparagine 275–leucine 295. At arginine 296–valine 307 the chain is on the cytoplasmic side.

It belongs to the synaptobrevin family.

The protein localises to the endoplasmic reticulum membrane. May be involved in vesicle transport between the ER and the Golgi complex. This Rattus norvegicus (Rat) protein is Vesicle-trafficking protein SEC22a (Sec22a).